The chain runs to 168 residues: Ribosome maturation factor RimM (168 aa).

The PRC barrel domain maps to 92-166 (EDTFYKADLI…RITVDPIEGM (75 aa)).

This sequence belongs to the RimM family. In terms of assembly, binds ribosomal protein uS19.

Its subcellular location is the cytoplasm. An accessory protein needed during the final step in the assembly of 30S ribosomal subunit, possibly for assembly of the head region. Essential for efficient processing of 16S rRNA. May be needed both before and after RbfA during the maturation of 16S rRNA. It has affinity for free ribosomal 30S subunits but not for 70S ribosomes. The protein is Ribosome maturation factor RimM of Alkaliphilus metalliredigens (strain QYMF).